We begin with the raw amino-acid sequence, 96 residues long: Co-chaperonin GroES (96 aa).

The protein belongs to the GroES chaperonin family. In terms of assembly, heptamer of 7 subunits arranged in a ring. Interacts with the chaperonin GroEL.

It is found in the cytoplasm. In terms of biological role, together with the chaperonin GroEL, plays an essential role in assisting protein folding. The GroEL-GroES system forms a nano-cage that allows encapsulation of the non-native substrate proteins and provides a physical environment optimized to promote and accelerate protein folding. GroES binds to the apical surface of the GroEL ring, thereby capping the opening of the GroEL channel. The protein is Co-chaperonin GroES of Paraburkholderia phytofirmans (strain DSM 17436 / LMG 22146 / PsJN) (Burkholderia phytofirmans).